The following is a 557-amino-acid chain: Isocitrate lyase (557 aa).

Threonine 53 is subject to Phosphothreonine. 106–108 provides a ligand contact to substrate; that stretch reads SGW. Aspartate 179 is a binding site for Mg(2+). Cysteine 217 serves as the catalytic Proton acceptor. Residues 218–219, arginine 254, 437–441, and threonine 471 each bind substrate; these read GH and NLSPS.

This sequence belongs to the isocitrate lyase/PEP mutase superfamily. Isocitrate lyase family. Homotetramer. Mg(2+) serves as cofactor. Post-translationally, phosphorylated in response to elevated glucose levels, leading first to reversible inactivation of the enzyme (short-term inactivation), and at a later stage to proteolytic degradation of the protein (long-term inactivation).

The protein localises to the cytoplasm. Its subcellular location is the secreted. It is found in the extracellular space. The protein resides in the extracellular matrix. It localises to the vacuole. The catalysed reaction is D-threo-isocitrate = glyoxylate + succinate. It catalyses the reaction (2S,3R)-3-hydroxybutane-1,2,3-tricarboxylate = pyruvate + succinate. The protein operates within carbohydrate metabolism; glyoxylate cycle; (S)-malate from isocitrate: step 1/2. With respect to regulation, phosphorylated and inactivated after addition of glucose to the cell culture (repressing conditions). In terms of biological role, catalyzes the formation of succinate and glyoxylate from isocitrate, a key step of the glyoxylate cycle, which operates as an anaplerotic route for replenishing the tricarboxylic acid cycle. Required for growth on ethanol or acetate, but dispensable when fermentable carbon sources are available. Also acts on 2-methylisocitrate. The protein is Isocitrate lyase of Saccharomyces cerevisiae (strain ATCC 204508 / S288c) (Baker's yeast).